Reading from the N-terminus, the 399-residue chain is 1-deoxy-D-xylulose 5-phosphate reductoisomerase (399 aa).

NADPH contacts are provided by T16, G17, S18, I19, G42, R43, N44, and N127. 1-deoxy-D-xylulose 5-phosphate is bound at residue K128. Residue E129 coordinates NADPH. D153 lines the Mn(2+) pocket. Positions 154, 155, 179, and 202 each coordinate 1-deoxy-D-xylulose 5-phosphate. E155 contacts Mn(2+). G208 is a binding site for NADPH. 4 residues coordinate 1-deoxy-D-xylulose 5-phosphate: S215, N220, K221, and E224. A Mn(2+)-binding site is contributed by E224.

It belongs to the DXR family. Requires Mg(2+) as cofactor. Mn(2+) serves as cofactor.

It carries out the reaction 2-C-methyl-D-erythritol 4-phosphate + NADP(+) = 1-deoxy-D-xylulose 5-phosphate + NADPH + H(+). The protein operates within isoprenoid biosynthesis; isopentenyl diphosphate biosynthesis via DXP pathway; isopentenyl diphosphate from 1-deoxy-D-xylulose 5-phosphate: step 1/6. Its function is as follows. Catalyzes the NADPH-dependent rearrangement and reduction of 1-deoxy-D-xylulose-5-phosphate (DXP) to 2-C-methyl-D-erythritol 4-phosphate (MEP). The sequence is that of 1-deoxy-D-xylulose 5-phosphate reductoisomerase from Caulobacter vibrioides (strain NA1000 / CB15N) (Caulobacter crescentus).